Consider the following 246-residue polypeptide: O-antigen export system ATP-binding protein RfbB (246 aa).

The ABC transporter domain occupies 22-246; it reads SGIKDLVFHP…IIELYKQAMA (225 aa). An ATP-binding site is contributed by 63–70; sequence GRNGAGKS.

Belongs to the ABC transporter superfamily.

The protein resides in the cell inner membrane. In terms of biological role, may form an ATP-driven O-antigen export apparatus, in association with RfbA. The protein is O-antigen export system ATP-binding protein RfbB (rfbB) of Klebsiella pneumoniae.